The sequence spans 160 residues: MSGHGAPDIDPTALDGSGLRVTVVAGRWHDEISAGLLAGARRVLDAAGVTTTVIRVPGSFELPVVARAALDAGADAVVALGVIIRGGTPHFEYVSDAATSGLTQASLLAGKPIGFGLLTLDDEQQGIDRAGLPGSKEDKGAEAAEAAVTTALLLKSIRGA.

5-amino-6-(D-ribitylamino)uracil contacts are provided by residues Trp28, 59-61, and 82-84; these read SFE and VII. 87-88 lines the (2S)-2-hydroxy-3-oxobutyl phosphate pocket; sequence GT. His90 acts as the Proton donor in catalysis. Phe115 contacts 5-amino-6-(D-ribitylamino)uracil. Arg129 is a binding site for (2S)-2-hydroxy-3-oxobutyl phosphate.

The protein belongs to the DMRL synthase family.

It catalyses the reaction (2S)-2-hydroxy-3-oxobutyl phosphate + 5-amino-6-(D-ribitylamino)uracil = 6,7-dimethyl-8-(1-D-ribityl)lumazine + phosphate + 2 H2O + H(+). It functions in the pathway cofactor biosynthesis; riboflavin biosynthesis; riboflavin from 2-hydroxy-3-oxobutyl phosphate and 5-amino-6-(D-ribitylamino)uracil: step 1/2. Catalyzes the formation of 6,7-dimethyl-8-ribityllumazine by condensation of 5-amino-6-(D-ribitylamino)uracil with 3,4-dihydroxy-2-butanone 4-phosphate. This is the penultimate step in the biosynthesis of riboflavin. This chain is 6,7-dimethyl-8-ribityllumazine synthase, found in Clavibacter michiganensis subsp. michiganensis (strain NCPPB 382).